The sequence spans 97 residues: UPF0250 protein HD_2015 (97 aa).

Belongs to the UPF0250 family.

This chain is UPF0250 protein HD_2015, found in Haemophilus ducreyi (strain 35000HP / ATCC 700724).